The following is a 391-amino-acid chain: Serpin-ZX (391 aa).

An RCL region spans residues 337-361 (GTEAAAASAGVIKLRGLLMEEDEID). Residue asparagine 375 is glycosylated (N-linked (GlcNAc...) asparagine).

It belongs to the serpin family. As to quaternary structure, interacts with RD21A. As to expression, expressed in root tips. Expressed in siliques (at protein level).

Its subcellular location is the secreted. It localises to the extracellular space. The protein localises to the apoplast. The protein resides in the cytoplasm. Its function is as follows. Inhibits metacaspase-9 (MC9) cysteine protease. Functions through cleavage of its reactive center loop and covalent binding to MC9. Involved in the control of elicitor-stimulated programmed cell death (PCD). During infection by the necrotrophic fungal pathogen Botrytis cinerea, functions to protect cells by limiting the PCD-promoting protease RD21A activity that is released from the ER body or vacuole to the cytoplasm. Involved in the control of water stress-induced cell death by limiting the pro-death protease RD21A activity that is released from the vacuole to the cytoplasm. In Arabidopsis thaliana (Mouse-ear cress), this protein is Serpin-ZX.